Consider the following 314-residue polypeptide: Glycerol-3-phosphate dehydrogenase [NAD(P)+] (314 aa).

The NADPH site is built by S14, F15, R35, and K108. Sn-glycerol 3-phosphate is bound by residues K108 and G136. A140 is an NADPH binding site. Sn-glycerol 3-phosphate-binding residues include K191, D247, S257, R258, and N259. The Proton acceptor role is filled by K191. R258 contacts NADPH. NADPH contacts are provided by L282 and E284.

This sequence belongs to the NAD-dependent glycerol-3-phosphate dehydrogenase family.

It is found in the cytoplasm. The catalysed reaction is sn-glycerol 3-phosphate + NAD(+) = dihydroxyacetone phosphate + NADH + H(+). The enzyme catalyses sn-glycerol 3-phosphate + NADP(+) = dihydroxyacetone phosphate + NADPH + H(+). The protein operates within membrane lipid metabolism; glycerophospholipid metabolism. Catalyzes the reduction of the glycolytic intermediate dihydroxyacetone phosphate (DHAP) to sn-glycerol 3-phosphate (G3P), the key precursor for phospholipid synthesis. This chain is Glycerol-3-phosphate dehydrogenase [NAD(P)+], found in Rickettsia bellii (strain OSU 85-389).